The following is a 1209-amino-acid chain: Phospholipid-transporting ATPase ID (1209 aa).

The Cytoplasmic portion of the chain corresponds to 1–68; it reads MTVPKEIPEK…NIVTFLPVNL (68 aa). The tract at residues 12–36 is disordered; it reads ARAGAPPSWSQKKPSWGTEEERRAR. Residues 69–89 form a helical membrane-spanning segment; sequence FEQFQEVANTYFLFLLILQLI. The Exoplasmic loop segment spans residues 90–91; the sequence is PQ. The chain crosses the membrane as a helical span at residues 92 to 112; it reads ISSLSWFTTIVPLVLVLTITA. Residues 113-295 are Cytoplasmic-facing; it reads VKDATDDYFR…TSIDRLMNTL (183 aa). Residues 296–316 form a helical membrane-spanning segment; that stretch reads VLWIFGFLVCMGVILAIGNAI. Residues 317–338 lie on the Exoplasmic loop side of the membrane; sequence WEHEVGTRFQVYLPWDEAVDSA. Residues 339 to 359 traverse the membrane as a helical segment; the sequence is FFSGFLSFWSYIIILNTVVPI. At 360–898 the chain is on the cytoplasmic side; it reads SLYVSVEVIR…KFLCYFFYKN (539 aa). Catalysis depends on Asp411, which acts as the 4-aspartylphosphate intermediate. ATP contacts are provided by Asp411, Lys412, Thr413, Glu515, Phe556, Lys579, Arg613, Thr693, Gly694, Asp695, Arg807, and Lys813. Asp411 is a Mg(2+) binding site. Thr413 lines the Mg(2+) pocket. Asp833 contacts Mg(2+). The ATP site is built by Asn836 and Asp837. Asp837 contributes to the Mg(2+) binding site. A helical membrane pass occupies residues 899–919; the sequence is FAFTMVHFWFGFFCGFSAQTV. Over 920 to 922 the chain is Exoplasmic loop; it reads YDQ. A helical transmembrane segment spans residues 923 to 943; that stretch reads YFITLYNIVYTSLPVLAMGVF. Topologically, residues 944 to 972 are cytoplasmic; that stretch reads DQDVPEQRSMEYPKLYEPGQLNLLFNKRE. A helical membrane pass occupies residues 973 to 993; that stretch reads FFICIAQGIYTSVLMFFIPYG. The Exoplasmic loop segment spans residues 994 to 1011; that stretch reads VFAEATRDDGTQLADYQS. The helical transmembrane segment at 1012–1032 threads the bilayer; that stretch reads FAVTVATSLVIVVSVQIGLDT. Residues 1033–1036 are Cytoplasmic-facing; the sequence is GYWT. A helical transmembrane segment spans residues 1037–1057; that stretch reads AINHFFIWGSLAVYFAILFAM. The Exoplasmic loop segment spans residues 1058–1082; that stretch reads HSNGLFDMFPNQFRFVGNAQNTLAQ. The chain crosses the membrane as a helical span at residues 1083 to 1103; sequence PTVWLTIALTTAVCIMPVVAF. The Cytoplasmic portion of the chain corresponds to 1104-1209; it reads RFLRLSLKPD…SGGAEKPLKG (106 aa). Ser1175 is subject to Phosphoserine. The tract at residues 1179–1209 is disordered; the sequence is RSSSSWIESLRRKKSDSANSPSGGAEKPLKG.

This sequence belongs to the cation transport ATPase (P-type) (TC 3.A.3) family. Type IV subfamily. As to quaternary structure, component of a P4-ATPase flippase complex which consists of a catalytic alpha subunit ATP8B2 and an accessory beta subunit TMEM30A or TMEM30B. Requires Mg(2+) as cofactor. In terms of tissue distribution, expressed in brain and testes (at protein level).

The protein localises to the cell membrane. It is found in the endoplasmic reticulum membrane. It catalyses the reaction ATP + H2O + phospholipidSide 1 = ADP + phosphate + phospholipidSide 2.. The catalysed reaction is a 1,2-diacyl-sn-glycero-3-phosphocholine(out) + ATP + H2O = a 1,2-diacyl-sn-glycero-3-phosphocholine(in) + ADP + phosphate + H(+). Catalytic component of P4-ATPase flippase complex, which catalyzes the hydrolysis of ATP coupled to the transport of phosphatidylcholine (PC) from the outer to the inner leaflet of the plasma membrane. May contribute to the maintenance of membrane lipid asymmetry. In Mus musculus (Mouse), this protein is Phospholipid-transporting ATPase ID.